A 236-amino-acid chain; its full sequence is Cytochrome c biogenesis ATP-binding export protein CcmA (236 aa).

The 222-residue stretch at 14 to 235 (LEATGLQVAR…SAGDRVTGTE (222 aa)) folds into the ABC transporter domain. Residue 46–53 (GANGSGKT) coordinates ATP.

It belongs to the ABC transporter superfamily. CcmA exporter (TC 3.A.1.107) family. As to quaternary structure, the complex is composed of two ATP-binding proteins (CcmA) and two transmembrane proteins (CcmB).

The protein resides in the cell inner membrane. It carries out the reaction heme b(in) + ATP + H2O = heme b(out) + ADP + phosphate + H(+). Part of the ABC transporter complex CcmAB involved in the biogenesis of c-type cytochromes; once thought to export heme, this seems not to be the case, but its exact role is uncertain. Responsible for energy coupling to the transport system. This is Cytochrome c biogenesis ATP-binding export protein CcmA from Alkalilimnicola ehrlichii (strain ATCC BAA-1101 / DSM 17681 / MLHE-1).